A 399-amino-acid chain; its full sequence is Putative endoplasmin-like protein (399 aa).

K130 is covalently cross-linked (Glycyl lysine isopeptide (Lys-Gly) (interchain with G-Cter in SUMO2)). Residues 350–399 form a disordered region; the sequence is LDLAVVEEPDEEPEETAEDKEQDKDKEMDVGTDEEKQETAKESTAEKDEL. Acidic residues predominate over residues 354–367; it reads VVEEPDEEPEETAE. The span at 368 to 399 shows a compositional bias: basic and acidic residues; the sequence is DKEQDKDKEMDVGTDEEKQETAKESTAEKDEL.

The protein belongs to the heat shock protein 90 family.

In terms of biological role, putative molecular chaperone. This chain is Putative endoplasmin-like protein (HSP90B2P), found in Homo sapiens (Human).